The following is a 451-amino-acid chain: Exodeoxyribonuclease 7 large subunit (451 aa).

Belongs to the XseA family. As to quaternary structure, heterooligomer composed of large and small subunits.

Its subcellular location is the cytoplasm. The enzyme catalyses Exonucleolytic cleavage in either 5'- to 3'- or 3'- to 5'-direction to yield nucleoside 5'-phosphates.. Functionally, bidirectionally degrades single-stranded DNA into large acid-insoluble oligonucleotides, which are then degraded further into small acid-soluble oligonucleotides. This is Exodeoxyribonuclease 7 large subunit from Neisseria gonorrhoeae (strain ATCC 700825 / FA 1090).